The primary structure comprises 408 residues: FAD-dependent monooxygenase nscC (408 aa).

An N-terminal signal peptide occupies residues 1–20; it reads MAPPLPILIIGAGISGLTTA. FAD-binding residues include Glu34 and Ala45. Residues Asn91 and Asn103 are each glycosylated (N-linked (GlcNAc...) asparagine). Arg119 contacts FAD. 2 N-linked (GlcNAc...) asparagine glycosylation sites follow: Asn170 and Asn231. 2 residues coordinate FAD: Asp328 and Gly341.

It belongs to the paxM FAD-dependent monooxygenase family. FAD is required as a cofactor.

It participates in secondary metabolite biosynthesis. FAD-dependent monooxygenase; part of the gene cluster that mediates the biosynthesis of neosartoricin, a prenylated anthracenone that exhibits T-cell antiproliferative activity, suggestive of a physiological role as an immunosuppressive agent. The non-reducing polyketide synthase nscA probably synthesizes and cyclizes the decaketide backbone. The hydrolase nscB then mediates the product release through hydrolysis followed by spontaneous decarboxylation. The prenyltransferase nscD catalyzes the addition of the dimethylallyl group to the aromatic C5. The FAD-dependent monooxygenase nscC is then responsible for the stereospecific hydroxylation at C2. There is no gene encoding O-acetyltransferase in the nsc gene cluster; thus, the last step of 2-O-acetylation leading to neosartoricin may be catalyzed by an unidentified O-acetyltransferase. The polypeptide is FAD-dependent monooxygenase nscC (Neosartorya fischeri (strain ATCC 1020 / DSM 3700 / CBS 544.65 / FGSC A1164 / JCM 1740 / NRRL 181 / WB 181) (Aspergillus fischerianus)).